The chain runs to 194 residues: Adenylate kinase isoenzyme 1 (194 aa).

At methionine 1 the chain carries N-acetylmethionine. 18–23 is a binding site for ATP; that stretch reads GSGKGT. Residue serine 38 is modified to Phosphoserine. Positions 38 to 67 are NMP; the sequence is STGDLLRSEVSSGSARGKKLSEIMEKGQLV. Residues threonine 39, arginine 44, 65-67, 94-97, and glutamine 101 each bind AMP; these read QLV and GYPR. The segment at 131–141 is LID; the sequence is KRGETSGRVDD. An ATP-binding site is contributed by arginine 132. 2 residues coordinate AMP: arginine 138 and arginine 149. Glycine 177 serves as a coordination point for ATP.

The protein belongs to the adenylate kinase family. AK1 subfamily. Monomer. Mg(2+) is required as a cofactor.

The protein resides in the cytoplasm. The catalysed reaction is a ribonucleoside 5'-phosphate + ATP = a ribonucleoside 5'-diphosphate + ADP. It carries out the reaction AMP + ATP = 2 ADP. The enzyme catalyses dAMP + ATP = dADP + ADP. It catalyses the reaction dATP + AMP = dADP + ADP. The catalysed reaction is dAMP + dATP = 2 dADP. It carries out the reaction a 2'-deoxyribonucleoside 5'-diphosphate + ATP = a 2'-deoxyribonucleoside 5'-triphosphate + ADP. The enzyme catalyses a ribonucleoside 5'-diphosphate + ATP = a ribonucleoside 5'-triphosphate + ADP. It catalyses the reaction CDP + GTP = CTP + GDP. The catalysed reaction is GDP + ATP = GTP + ADP. It carries out the reaction UDP + ATP = UTP + ADP. The enzyme catalyses GTP + UDP = UTP + GDP. It catalyses the reaction dTDP + GTP = dTTP + GDP. The catalysed reaction is dCDP + GTP = dCTP + GDP. It carries out the reaction dGDP + ATP = dGTP + ADP. The enzyme catalyses dADP + GTP = dATP + GDP. It catalyses the reaction thiamine diphosphate + ADP = thiamine triphosphate + AMP. Catalyzes the reversible transfer of the terminal phosphate group between ATP and AMP. Also displays broad nucleoside diphosphate kinase activity. Plays an important role in cellular energy homeostasis and in adenine nucleotide metabolism. Also catalyzes at a very low rate the synthesis of thiamine triphosphate (ThTP) from thiamine diphosphate (ThDP) and ADP. The sequence is that of Adenylate kinase isoenzyme 1 from Homo sapiens (Human).